The sequence spans 363 residues: NAD(P)H-quinone oxidoreductase subunit 1, chloroplastic (363 aa).

Helical transmembrane passes span 30-50 (LVPI…IVWL), 98-118 (FSIG…VIPF), 129-149 (IGIF…LMSG), 248-268 (YSGI…LLSS), 300-320 (IIGT…FLFI), and 343-363 (FLLP…LLSL).

This sequence belongs to the complex I subunit 1 family. NDH is composed of at least 16 different subunits, 5 of which are encoded in the nucleus.

The protein resides in the plastid. Its subcellular location is the chloroplast thylakoid membrane. It catalyses the reaction a plastoquinone + NADH + (n+1) H(+)(in) = a plastoquinol + NAD(+) + n H(+)(out). The enzyme catalyses a plastoquinone + NADPH + (n+1) H(+)(in) = a plastoquinol + NADP(+) + n H(+)(out). NDH shuttles electrons from NAD(P)H:plastoquinone, via FMN and iron-sulfur (Fe-S) centers, to quinones in the photosynthetic chain and possibly in a chloroplast respiratory chain. The immediate electron acceptor for the enzyme in this species is believed to be plastoquinone. Couples the redox reaction to proton translocation, and thus conserves the redox energy in a proton gradient. In Gossypium hirsutum (Upland cotton), this protein is NAD(P)H-quinone oxidoreductase subunit 1, chloroplastic.